The chain runs to 181 residues: ATP synthase subunit b, chloroplastic (181 aa).

Residues 28–50 (IINLSVVLGVLIYFGKGVLSNLL) traverse the membrane as a helical segment.

The protein belongs to the ATPase B chain family. F-type ATPases have 2 components, F(1) - the catalytic core - and F(0) - the membrane proton channel. F(1) has five subunits: alpha(3), beta(3), gamma(1), delta(1), epsilon(1). F(0) has four main subunits: a(1), b(1), b'(1) and c(10-14). The alpha and beta chains form an alternating ring which encloses part of the gamma chain. F(1) is attached to F(0) by a central stalk formed by the gamma and epsilon chains, while a peripheral stalk is formed by the delta, b and b' chains.

It localises to the plastid. Its subcellular location is the chloroplast thylakoid membrane. F(1)F(0) ATP synthase produces ATP from ADP in the presence of a proton or sodium gradient. F-type ATPases consist of two structural domains, F(1) containing the extramembraneous catalytic core and F(0) containing the membrane proton channel, linked together by a central stalk and a peripheral stalk. During catalysis, ATP synthesis in the catalytic domain of F(1) is coupled via a rotary mechanism of the central stalk subunits to proton translocation. Functionally, component of the F(0) channel, it forms part of the peripheral stalk, linking F(1) to F(0). This is ATP synthase subunit b, chloroplastic from Cryptomeria japonica (Japanese cedar).